We begin with the raw amino-acid sequence, 837 residues long: Protein translocase subunit SecA (837 aa).

Residues Gln-87, 105 to 109 (GEGKT), and Asp-494 each bind ATP. A disordered region spans residues 788-837 (HKESKSDLEYSDSENTETKKKPKRRSEPKVGRNDPCPCGSGKKYKKCCGK). Residues Cys-823, Cys-825, Cys-834, and Cys-835 each contribute to the Zn(2+) site.

It belongs to the SecA family. As to quaternary structure, monomer and homodimer. Part of the essential Sec protein translocation apparatus which comprises SecA, SecYEG and auxiliary proteins SecDF-YajC and YidC. Zn(2+) serves as cofactor.

The protein resides in the cell inner membrane. The protein localises to the cytoplasm. It carries out the reaction ATP + H2O + cellular proteinSide 1 = ADP + phosphate + cellular proteinSide 2.. Part of the Sec protein translocase complex. Interacts with the SecYEG preprotein conducting channel. Has a central role in coupling the hydrolysis of ATP to the transfer of proteins into and across the cell membrane, serving as an ATP-driven molecular motor driving the stepwise translocation of polypeptide chains across the membrane. This Maridesulfovibrio salexigens (strain ATCC 14822 / DSM 2638 / NCIMB 8403 / VKM B-1763) (Desulfovibrio salexigens) protein is Protein translocase subunit SecA.